Here is a 487-residue protein sequence, read N- to C-terminus: Structure-specific endonuclease subunit SLX1 (487 aa).

Residues 27–109 (PFYACYLLRS…QKPELSRHLR (83 aa)) enclose the GIY-YIG domain. Positions 44–69 (RTYVGSTPDPPRRIRQHNGELKQGAW) are disordered. The SLX1-type zinc-finger motif lies at 262–328 (CHLCQERIAF…LPYQGLCPNC (67 aa)). The span at 359–396 (KAEKAEKAEKAEKAEKAEKAEKAGRKVRQREMKTKKGD) shows a compositional bias: basic and acidic residues. Disordered regions lie at residues 359-407 (KAEK…QPES) and 433-475 (PARS…SEPE). Residues 397 to 407 (QSNGTVAQPES) are compositionally biased toward polar residues. Basic and acidic residues predominate over residues 438-455 (KSKDVGGEGIRHSTHTDD). A compositionally biased stretch (acidic residues) spans 465–475 (ETEDESESEPE).

This sequence belongs to the SLX1 family. In terms of assembly, forms a heterodimer with SLX4. The cofactor is a divalent metal cation.

Its subcellular location is the nucleus. Catalytic subunit of the SLX1-SLX4 structure-specific endonuclease that resolves DNA secondary structures generated during DNA repair and recombination. Has endonuclease activity towards branched DNA substrates, introducing single-strand cuts in duplex DNA close to junctions with ss-DNA. The polypeptide is Structure-specific endonuclease subunit SLX1 (Cryptococcus neoformans var. neoformans serotype D (strain B-3501A) (Filobasidiella neoformans)).